A 172-amino-acid chain; its full sequence is Shikimate kinase (172 aa).

Residue 11–16 (GAGKST) coordinates ATP. Serine 15 is a Mg(2+) binding site. Residues aspartate 33, arginine 57, and glycine 79 each coordinate substrate. Arginine 117 lines the ATP pocket. Arginine 136 is a binding site for substrate. Residue arginine 153 coordinates ATP.

This sequence belongs to the shikimate kinase family. In terms of assembly, monomer. Mg(2+) is required as a cofactor.

It localises to the cytoplasm. It carries out the reaction shikimate + ATP = 3-phosphoshikimate + ADP + H(+). It functions in the pathway metabolic intermediate biosynthesis; chorismate biosynthesis; chorismate from D-erythrose 4-phosphate and phosphoenolpyruvate: step 5/7. Catalyzes the specific phosphorylation of the 3-hydroxyl group of shikimic acid using ATP as a cosubstrate. The protein is Shikimate kinase of Pseudomonas entomophila (strain L48).